A 285-amino-acid polypeptide reads, in one-letter code: Steroidogenic acute regulatory protein, mitochondrial (285 aa).

A mitochondrion-targeting transit peptide spans M1–L63. S57 and S195 each carry phosphoserine; by PKA. The START domain maps to L67–A280.

In terms of assembly, may interact with TSPO. Corpus luteum and adrenal gland.

The protein resides in the mitochondrion. It carries out the reaction cholesterol(in) = cholesterol(out). It participates in steroid metabolism; cholesterol metabolism. In terms of biological role, plays a key role in steroid hormone synthesis by enhancing the metabolism of cholesterol into pregnenolone. Mediates the transfer of cholesterol from the outer mitochondrial membrane to the inner mitochondrial membrane where it is cleaved to pregnenolone. The protein is Steroidogenic acute regulatory protein, mitochondrial (STAR) of Bos taurus (Bovine).